We begin with the raw amino-acid sequence, 473 residues long: Venom prothrombin activator vestarin-D1 (473 aa).

Residues 1-20 form the signal peptide; the sequence is MAPQLLLCLIQTFLWSLPEA. Positions 21–40 are excised as a propeptide; the sequence is ESNVFLKSNVANRFLQRTKR. The Gla domain occupies 41 to 86; it reads ANSGFEEIYPANFERECVEERCSKEEAREVFEDDEKTEAFWTVYVD. 4-carboxyglutamate occurs at positions 46, 47, 54, 56, 59, 60, 65, 66, 69, 72, and 75. A disulfide bond links Cys57 and Cys62. An EGF-like 1; calcium-binding domain is found at 86–122; that stretch reads DGDQCLSNPCHYGGTCKDGIGSYTCTCLAGYEGKNCE. Cystine bridges form between Cys90–Cys101, Cys95–Cys110, Cys112–Cys121, Cys129–Cys140, Cys136–Cys149, Cys151–Cys164, Cys172–Cys335, Cys235–Cys240, Cys383–Cys397, and Cys408–Cys436. A glycan (O-linked (Hex...) serine) is linked at Ser92. The EGF-like 2 domain maps to 129–164; that stretch reads CRVDNGNCWHFCKPVQNDTQCSCAEGYRLGDNGFSC. A propeptide spans 182–228 (activation peptide); the sequence is REASLPDFQTDFSDDYDAIDENNLIETVQSQSATLLKKSDNPNPDIR. The 232-residue stretch at 229-460 folds into the Peptidase S1 domain; sequence IVNGLDCKLG…FLPWIKTIMR (232 aa). Residue His270 is the Charge relay system of the active site. Asn273 carries N-linked (GlcNAc...) asparagine glycosylation. The active-site Charge relay system is Asp315. The active-site Charge relay system is the Ser412.

Belongs to the peptidase S1 family. Snake venom subfamily. Heterodimer of a light chain and a heavy chain; disulfide-linked. The vitamin K-dependent, enzymatic carboxylation of some glutamate residues allows the modified protein to bind calcium. As to expression, expressed by the venom gland.

Its subcellular location is the secreted. It catalyses the reaction Selective cleavage of Arg-|-Thr and then Arg-|-Ile bonds in prothrombin to form thrombin.. In terms of biological role, snake prothrombin activator that attacks the hemostatic system of prey. This protein is functionally similar to blood coagulation factor Xa. This Demansia vestigiata (Lesser black whip snake) protein is Venom prothrombin activator vestarin-D1.